The following is a 304-amino-acid chain: Mycothiol acetyltransferase (304 aa).

N-acetyltransferase domains lie at Ala16–Leu155 and Val164–Ala304. Glu46 serves as a coordination point for 1D-myo-inositol 2-(L-cysteinylamino)-2-deoxy-alpha-D-glucopyranoside. Position 87–89 (Leu87–Val89) interacts with acetyl-CoA. Residues Glu190, Lys230, and Glu237 each contribute to the 1D-myo-inositol 2-(L-cysteinylamino)-2-deoxy-alpha-D-glucopyranoside site. Acetyl-CoA is bound by residues Leu241–Val243 and Ala248–Ser254. Tyr275 lines the 1D-myo-inositol 2-(L-cysteinylamino)-2-deoxy-alpha-D-glucopyranoside pocket.

The protein belongs to the acetyltransferase family. MshD subfamily. In terms of assembly, monomer.

It catalyses the reaction 1D-myo-inositol 2-(L-cysteinylamino)-2-deoxy-alpha-D-glucopyranoside + acetyl-CoA = mycothiol + CoA + H(+). Its function is as follows. Catalyzes the transfer of acetyl from acetyl-CoA to desacetylmycothiol (Cys-GlcN-Ins) to form mycothiol. The protein is Mycothiol acetyltransferase of Clavibacter sepedonicus (Clavibacter michiganensis subsp. sepedonicus).